A 304-amino-acid polypeptide reads, in one-letter code: N-carbamoyl-D-amino acid hydrolase (304 aa).

The region spanning 5–276 (MILAVGQQGP…DEVITAAVCL (272 aa)) is the CN hydrolase domain. Active-site residues include Glu47, Lys127, and Cys172.

In terms of assembly, homotetramer.

It catalyses the reaction an N-carbamoyl-D-amino acid + H2O + 2 H(+) = a D-alpha-amino acid + NH4(+) + CO2. The activity decreases with increasing concentration of H(2)O(2). Has 68% and 43% of activity remaining upon treatment with 0.1 and 0.2 mM H(2)O(2) for 30 minutes, respectively. Inhibited significantly by 2 mM Zn(2+), Cu(2+) and Ag(+), moderately by Co(2+), Mn(2+), Sn(2+) and Mg(2+), and only slightly by Ba(2+). Slightly activated by Fe(2+) and Ca(2+). No effect on activity by metal chelators EDTA and 8-hydroxyquinoline at 2 mM or by dithiothreitol, 2-mercaptoethanol or phenylmethanesulfonyl fluoride. Functionally, catalyzes the hydrolysis of N-carbamoyl-D-amino acids to the corresponding D-amino acids. Hydrolyzes aromatic and aliphatic N-carbamoyl-D-amino acids in vitro. Effectively hydrolyzes N-carbamoyl-D-p-hydroxyphenylglycine and N-carbamoyl-DL-p-hydroxyphenylglycine, and to a lesser extent N-carbamoyl-D-methionine. No activity for N-carbamoyl-L-amino acids, N-carbamoyl-beta-alanine or (RS)-alpha-ethyl-N-carbamoylphenylglycine in vitro. This Ensifer adhaerens (Sinorhizobium morelense) protein is N-carbamoyl-D-amino acid hydrolase.